The chain runs to 304 residues: Oxygen-dependent coproporphyrinogen-III oxidase (304 aa).

Ser-94 provides a ligand contact to substrate. His-98 and His-108 together coordinate a divalent metal cation. The active-site Proton donor is His-108. 110–112 (NVR) lines the substrate pocket. His-147 and His-177 together coordinate a divalent metal cation. The tract at residues 242–277 (YVEFNLVYDRGTLFGLQTGGRTESILMSMPPLVRWE) is important for dimerization. 260–262 (GGR) lines the substrate pocket.

This sequence belongs to the aerobic coproporphyrinogen-III oxidase family. Homodimer. A divalent metal cation is required as a cofactor.

The protein resides in the cytoplasm. It carries out the reaction coproporphyrinogen III + O2 + 2 H(+) = protoporphyrinogen IX + 2 CO2 + 2 H2O. Its pathway is porphyrin-containing compound metabolism; protoporphyrin-IX biosynthesis; protoporphyrinogen-IX from coproporphyrinogen-III (O2 route): step 1/1. In terms of biological role, involved in the heme biosynthesis. Catalyzes the aerobic oxidative decarboxylation of propionate groups of rings A and B of coproporphyrinogen-III to yield the vinyl groups in protoporphyrinogen-IX. The chain is Oxygen-dependent coproporphyrinogen-III oxidase from Shewanella halifaxensis (strain HAW-EB4).